Reading from the N-terminus, the 285-residue chain is Bifunctional protein FolD (285 aa).

NADP(+) contacts are provided by residues Gly165–Ser167 and Ser190.

It belongs to the tetrahydrofolate dehydrogenase/cyclohydrolase family. Homodimer.

The enzyme catalyses (6R)-5,10-methylene-5,6,7,8-tetrahydrofolate + NADP(+) = (6R)-5,10-methenyltetrahydrofolate + NADPH. The catalysed reaction is (6R)-5,10-methenyltetrahydrofolate + H2O = (6R)-10-formyltetrahydrofolate + H(+). It functions in the pathway one-carbon metabolism; tetrahydrofolate interconversion. Catalyzes the oxidation of 5,10-methylenetetrahydrofolate to 5,10-methenyltetrahydrofolate and then the hydrolysis of 5,10-methenyltetrahydrofolate to 10-formyltetrahydrofolate. The sequence is that of Bifunctional protein FolD from Cupriavidus metallidurans (strain ATCC 43123 / DSM 2839 / NBRC 102507 / CH34) (Ralstonia metallidurans).